The chain runs to 218 residues: Glutathione S-transferase (218 aa).

In terms of domain architecture, GST N-terminal spans 3–88 (SKPVLGYWDI…YIGRKYKLTG (86 aa)). Glutathione is bound by residues 9–10 (YW), 43–46 (RSAW), lysine 50, 59–60 (NL), and 72–73 (QT). In terms of domain architecture, GST C-terminal spans 90-206 (NEPEELRVSL…YIKAQQPKLF (117 aa)). Tyrosine 116 is a substrate binding site.

This sequence belongs to the GST superfamily. Mu family.

The enzyme catalyses RX + glutathione = an S-substituted glutathione + a halide anion + H(+). Conjugation of reduced glutathione to a wide number of exogenous and endogenous hydrophobic electrophiles. In Tyrophagus putrescentiae (Mold mite), this protein is Glutathione S-transferase.